A 241-amino-acid chain; its full sequence is MIIHVEENYEAMSKKAALIVASQVVSNPAGVLGLATGSTPAGMYKELVDLFKEGIIDFSQITTFNLDEYYGLPKTNESSYYTYMMENLFNHINVPLERVHIPNGMAEDVEKECLAYEEKIRNAGGIDLQILGIGANGHIGFNEPDHKLSMKTHLVELTEKTIQDNSRFFQKEEDVPTKALSMGIGTILGAKKIILMANGKNKAEAIKEMTNGYLNPMVPASMIQAHPDVILIIDKEAASLL.

Catalysis depends on aspartate 67, which acts as the Proton acceptor; for enolization step. The active-site For ring-opening step is asparagine 136. Histidine 138 acts as the Proton acceptor; for ring-opening step in catalysis. The active-site For ring-opening step is glutamate 143.

Belongs to the glucosamine/galactosamine-6-phosphate isomerase family. NagB subfamily.

It carries out the reaction alpha-D-glucosamine 6-phosphate + H2O = beta-D-fructose 6-phosphate + NH4(+). The protein operates within amino-sugar metabolism; N-acetylneuraminate degradation; D-fructose 6-phosphate from N-acetylneuraminate: step 5/5. In terms of biological role, catalyzes the reversible isomerization-deamination of glucosamine 6-phosphate (GlcN6P) to form fructose 6-phosphate (Fru6P) and ammonium ion. The protein is Glucosamine-6-phosphate deaminase of Alkaliphilus oremlandii (strain OhILAs) (Clostridium oremlandii (strain OhILAs)).